A 75-amino-acid polypeptide reads, in one-letter code: Exodeoxyribonuclease 7 small subunit (75 aa).

This sequence belongs to the XseB family. Heterooligomer composed of large and small subunits.

The protein resides in the cytoplasm. It carries out the reaction Exonucleolytic cleavage in either 5'- to 3'- or 3'- to 5'-direction to yield nucleoside 5'-phosphates.. Bidirectionally degrades single-stranded DNA into large acid-insoluble oligonucleotides, which are then degraded further into small acid-soluble oligonucleotides. The sequence is that of Exodeoxyribonuclease 7 small subunit from Geobacter sp. (strain M21).